A 322-amino-acid polypeptide reads, in one-letter code: Protease HtpX homolog (322 aa).

2 consecutive transmembrane segments (helical) span residues 19 to 39 (ILLILFPCLVAVLTYLFCYLL) and 61 to 81 (FINLIPYIIGGVLVWFIIAYF). His-165 serves as a coordination point for Zn(2+). Glu-166 is an active-site residue. His-169 is a Zn(2+) binding site. 2 consecutive transmembrane segments (helical) span residues 175–195 (VRLLIISIVFVGIFSMLAQIA) and 216–236 (ILILVLAMIVAAIGYFFATLM). Glu-245 is a Zn(2+) binding site.

This sequence belongs to the peptidase M48B family. It depends on Zn(2+) as a cofactor.

It localises to the cell inner membrane. The protein is Protease HtpX homolog of Bacteroides fragilis (strain ATCC 25285 / DSM 2151 / CCUG 4856 / JCM 11019 / LMG 10263 / NCTC 9343 / Onslow / VPI 2553 / EN-2).